The sequence spans 290 residues: Pyridoxal 5'-phosphate synthase subunit PdxS (290 aa).

D22 contributes to the D-ribose 5-phosphate binding site. K79 (schiff-base intermediate with D-ribose 5-phosphate) is an active-site residue. D-ribose 5-phosphate is bound at residue G151. R163 contacts D-glyceraldehyde 3-phosphate. Residues G212 and 233 to 234 each bind D-ribose 5-phosphate; that span reads GS.

This sequence belongs to the PdxS/SNZ family. As to quaternary structure, in the presence of PdxT, forms a dodecamer of heterodimers.

The catalysed reaction is aldehydo-D-ribose 5-phosphate + D-glyceraldehyde 3-phosphate + L-glutamine = pyridoxal 5'-phosphate + L-glutamate + phosphate + 3 H2O + H(+). It participates in cofactor biosynthesis; pyridoxal 5'-phosphate biosynthesis. In terms of biological role, catalyzes the formation of pyridoxal 5'-phosphate from ribose 5-phosphate (RBP), glyceraldehyde 3-phosphate (G3P) and ammonia. The ammonia is provided by the PdxT subunit. Can also use ribulose 5-phosphate and dihydroxyacetone phosphate as substrates, resulting from enzyme-catalyzed isomerization of RBP and G3P, respectively. This is Pyridoxal 5'-phosphate synthase subunit PdxS from Clostridium botulinum (strain Langeland / NCTC 10281 / Type F).